The chain runs to 207 residues: NAD(P)H-quinone oxidoreductase subunit K, chloroplastic (207 aa).

[4Fe-4S] cluster contacts are provided by C47, C48, C112, and C143.

It belongs to the complex I 20 kDa subunit family. In terms of assembly, NDH is composed of at least 16 different subunits, 5 of which are encoded in the nucleus. It depends on [4Fe-4S] cluster as a cofactor.

The protein localises to the plastid. It localises to the chloroplast thylakoid membrane. It carries out the reaction a plastoquinone + NADH + (n+1) H(+)(in) = a plastoquinol + NAD(+) + n H(+)(out). The enzyme catalyses a plastoquinone + NADPH + (n+1) H(+)(in) = a plastoquinol + NADP(+) + n H(+)(out). Functionally, NDH shuttles electrons from NAD(P)H:plastoquinone, via FMN and iron-sulfur (Fe-S) centers, to quinones in the photosynthetic chain and possibly in a chloroplast respiratory chain. The immediate electron acceptor for the enzyme in this species is believed to be plastoquinone. Couples the redox reaction to proton translocation, and thus conserves the redox energy in a proton gradient. This Psilotum nudum (Whisk fern) protein is NAD(P)H-quinone oxidoreductase subunit K, chloroplastic.